The sequence spans 313 residues: Ribosomal RNA small subunit methyltransferase H (313 aa).

S-adenosyl-L-methionine is bound by residues 33–35, aspartate 53, phenylalanine 80, aspartate 102, and glutamine 109; that span reads GGH. Residues 291-313 are disordered; that stretch reads SDEEMRANPRAQSAKLRAAEKIR.

Belongs to the methyltransferase superfamily. RsmH family.

The protein localises to the cytoplasm. It catalyses the reaction cytidine(1402) in 16S rRNA + S-adenosyl-L-methionine = N(4)-methylcytidine(1402) in 16S rRNA + S-adenosyl-L-homocysteine + H(+). Functionally, specifically methylates the N4 position of cytidine in position 1402 (C1402) of 16S rRNA. The sequence is that of Ribosomal RNA small subunit methyltransferase H from Heliobacterium modesticaldum (strain ATCC 51547 / Ice1).